A 219-amino-acid polypeptide reads, in one-letter code: Thiamine-phosphate synthase (219 aa).

Residues 44–48 and Asn-79 contribute to the 4-amino-2-methyl-5-(diphosphooxymethyl)pyrimidine site; that span reads QFREK. Mg(2+) is bound by residues Asp-80 and Asp-99. Ser-117 contributes to the 4-amino-2-methyl-5-(diphosphooxymethyl)pyrimidine binding site. Residue 143 to 145 participates in 2-[(2R,5Z)-2-carboxy-4-methylthiazol-5(2H)-ylidene]ethyl phosphate binding; that stretch reads TST. Lys-146 contributes to the 4-amino-2-methyl-5-(diphosphooxymethyl)pyrimidine binding site. 2-[(2R,5Z)-2-carboxy-4-methylthiazol-5(2H)-ylidene]ethyl phosphate contacts are provided by residues Gly-175 and 195-196; that span reads IS.

Belongs to the thiamine-phosphate synthase family. The cofactor is Mg(2+).

The enzyme catalyses 2-[(2R,5Z)-2-carboxy-4-methylthiazol-5(2H)-ylidene]ethyl phosphate + 4-amino-2-methyl-5-(diphosphooxymethyl)pyrimidine + 2 H(+) = thiamine phosphate + CO2 + diphosphate. The catalysed reaction is 2-(2-carboxy-4-methylthiazol-5-yl)ethyl phosphate + 4-amino-2-methyl-5-(diphosphooxymethyl)pyrimidine + 2 H(+) = thiamine phosphate + CO2 + diphosphate. It catalyses the reaction 4-methyl-5-(2-phosphooxyethyl)-thiazole + 4-amino-2-methyl-5-(diphosphooxymethyl)pyrimidine + H(+) = thiamine phosphate + diphosphate. The protein operates within cofactor biosynthesis; thiamine diphosphate biosynthesis; thiamine phosphate from 4-amino-2-methyl-5-diphosphomethylpyrimidine and 4-methyl-5-(2-phosphoethyl)-thiazole: step 1/1. Its function is as follows. Condenses 4-methyl-5-(beta-hydroxyethyl)thiazole monophosphate (THZ-P) and 2-methyl-4-amino-5-hydroxymethyl pyrimidine pyrophosphate (HMP-PP) to form thiamine monophosphate (TMP). The protein is Thiamine-phosphate synthase of Bacillus anthracis (strain A0248).